A 316-amino-acid chain; its full sequence is N-acetylmuramic acid 6-phosphate etherase (316 aa).

Positions 68–231 constitute an SIS domain; the sequence is ITDRLRSGGR…STCAMVRLGK (164 aa). Glu96 (proton donor) is an active-site residue. Glu127 is an active-site residue.

Belongs to the GCKR-like family. MurNAc-6-P etherase subfamily. Homodimer.

The enzyme catalyses N-acetyl-D-muramate 6-phosphate + H2O = N-acetyl-D-glucosamine 6-phosphate + (R)-lactate. The protein operates within amino-sugar metabolism; N-acetylmuramate degradation. Specifically catalyzes the cleavage of the D-lactyl ether substituent of MurNAc 6-phosphate, producing GlcNAc 6-phosphate and D-lactate. The polypeptide is N-acetylmuramic acid 6-phosphate etherase (Prochlorococcus marinus (strain MIT 9303)).